The chain runs to 446 residues: Beta-glucosidase A (446 aa).

Glu-166 serves as the catalytic Proton donor. Glu-351 functions as the Nucleophile in the catalytic mechanism.

It belongs to the glycosyl hydrolase 1 family.

It catalyses the reaction Hydrolysis of terminal, non-reducing beta-D-glucosyl residues with release of beta-D-glucose.. Its pathway is glycan metabolism; cellulose degradation. The sequence is that of Beta-glucosidase A (bglA) from Thermotoga maritima (strain ATCC 43589 / DSM 3109 / JCM 10099 / NBRC 100826 / MSB8).